Reading from the N-terminus, the 273-residue chain is uncharacterized protein (273 aa).

2 helical membrane-spanning segments follow: residues 24–44 (VGVSAIDGLIAAVVAGPVTIL) and 103–123 (IVGPWAIGFSLGLSLGGEAWA). Residues 132–194 (SDLPHHGRQS…QPPAQTQPYR (63 aa)) form a disordered region. The segment covering 164 to 179 (SSHHIRSPAVARHHKT) has biased composition (basic residues). Residues 183-192 (TTQPPAQTQP) show a composition bias toward low complexity.

It is found in the cell membrane. This is an uncharacterized protein from Sinorhizobium fredii (strain NBRC 101917 / NGR234).